Reading from the N-terminus, the 69-residue chain is Omega-oxotoxin-Ol1a (69 aa).

Residues 1-68 form the Oxytoxin-type inhibitor cystine knot (ICK) domain; sequence DWECLPLHSS…GKINTCDKYK (68 aa). Disulfide bonds link cysteine 4–cysteine 18, cysteine 11–cysteine 23, cysteine 15–cysteine 64, cysteine 17–cysteine 52, and cysteine 25–cysteine 50. An Asparagine amide modification is found at asparagine 69.

This sequence belongs to the spiderine family. Spiderine subfamily. In terms of tissue distribution, expressed by the venom gland.

Its subcellular location is the secreted. In terms of biological role, weak blocker of vertebrate P/Q-, N- and L-type voltage-gated calcium channels (Cav1 and Cav2). Is both paralytic and lethal when injected into lepidopteran larvae. Is not toxic to mice. The protein is Omega-oxotoxin-Ol1a of Oxyopes lineatus (Lynx spider).